The following is a 372-amino-acid chain: NAD(P)H-quinone oxidoreductase subunit 1 (372 aa).

Transmembrane regions (helical) follow at residues 27–47, 97–117, 128–148, 176–196, 204–224, 266–286, 308–328, and 347–367; these read IIWL…GVLV, ILFT…WLIV, VGIG…GLLM, LALS…IDIV, ILSW…ICAL, ILSA…PIPV, SIGI…AILL, and FLLP…LAFP.

It belongs to the complex I subunit 1 family. As to quaternary structure, NDH-1 is composed of at least 11 different subunits.

Its subcellular location is the cellular thylakoid membrane. The catalysed reaction is a plastoquinone + NADH + (n+1) H(+)(in) = a plastoquinol + NAD(+) + n H(+)(out). It catalyses the reaction a plastoquinone + NADPH + (n+1) H(+)(in) = a plastoquinol + NADP(+) + n H(+)(out). In terms of biological role, NDH-1 shuttles electrons from an unknown electron donor, via FMN and iron-sulfur (Fe-S) centers, to quinones in the respiratory and/or the photosynthetic chain. The immediate electron acceptor for the enzyme in this species is believed to be plastoquinone. Couples the redox reaction to proton translocation, and thus conserves the redox energy in a proton gradient. The polypeptide is NAD(P)H-quinone oxidoreductase subunit 1 (Prochlorococcus marinus subsp. pastoris (strain CCMP1986 / NIES-2087 / MED4)).